We begin with the raw amino-acid sequence, 492 residues long: 5-taurinomethyluridine-[tRNA] synthase subunit GTPB3, mitochondrial (492 aa).

Residues 1-20 (MWRGLWTLAAQAARGPRRLC) constitute a mitochondrion transit peptide. 5,10-methylenetetrahydrofolate is bound by residues Arg-52, Glu-112, and Lys-152. Positions 249 to 416 (GVHVVVTGPP…LLEALRKELA (168 aa)) constitute a TrmE-type G domain. Residues 256-263 (GPPNAGKS), 282-286 (GTTRD), 303-306 (DTAG), 374-377 (NKSD), and 397-399 (SCL) contribute to the GTP site. Asn-259 contacts K(+). Positions 263 and 284 each coordinate Mg(2+). Lys-492 contributes to the 5,10-methylenetetrahydrofolate binding site.

It belongs to the TRAFAC class TrmE-Era-EngA-EngB-Septin-like GTPase superfamily. TrmE GTPase family. Homodimer; forms a dimer in the presence of potassium. Interacts with MTO1; forms the GTPBP3-MTO1 complex composed of homodimers of GTPBP3 and MTO1. In terms of assembly, homodimer, forms homodimer in vivo. The cofactor is K(+). In terms of tissue distribution, ubiquitously expressed.

Its subcellular location is the mitochondrion. The protein resides in the cytoplasm. It catalyses the reaction GTP + H2O = GDP + phosphate + H(+). Functionally, GTPase component of the GTPBP3-MTO1 complex that catalyzes the 5-taurinomethyluridine (taum(5)U) modification at the 34th wobble position (U34) of mitochondrial tRNAs (mt-tRNAs), which plays a role in mt-tRNA decoding and mitochondrial translation. Taum(5)U formation on mammalian mt-tRNA requires the presence of both GTPBP3-mediated GTPase activity and MTO1 catalytic activity. The protein is 5-taurinomethyluridine-[tRNA] synthase subunit GTPB3, mitochondrial of Homo sapiens (Human).